The primary structure comprises 547 residues: Chaperonin GroEL (547 aa).

ATP contacts are provided by residues 30-33 (TLGP), lysine 51, 87-91 (DGTTT), glycine 415, and aspartate 496.

The protein belongs to the chaperonin (HSP60) family. As to quaternary structure, forms a cylinder of 14 subunits composed of two heptameric rings stacked back-to-back. Interacts with the co-chaperonin GroES.

The protein resides in the cytoplasm. It carries out the reaction ATP + H2O + a folded polypeptide = ADP + phosphate + an unfolded polypeptide.. Together with its co-chaperonin GroES, plays an essential role in assisting protein folding. The GroEL-GroES system forms a nano-cage that allows encapsulation of the non-native substrate proteins and provides a physical environment optimized to promote and accelerate protein folding. In Chlorobium phaeobacteroides (strain DSM 266 / SMG 266 / 2430), this protein is Chaperonin GroEL.